A 205-amino-acid chain; its full sequence is Phosphoheptose isomerase (205 aa).

Positions 38 to 200 (LAVRLALGSK…LFEAVGELEP (163 aa)) constitute an SIS domain. Substrate is bound at residue 53–55 (NGG). His-62 and Glu-66 together coordinate Zn(2+). Substrate contacts are provided by residues Glu-66, 95–96 (ND), 121–123 (STS), Ser-126, and Gln-173. Zn(2+)-binding residues include Gln-173 and His-181.

The protein belongs to the SIS family. GmhA subfamily. As to quaternary structure, homotetramer. Zn(2+) serves as cofactor.

The protein localises to the cytoplasm. The catalysed reaction is 2 D-sedoheptulose 7-phosphate = D-glycero-alpha-D-manno-heptose 7-phosphate + D-glycero-beta-D-manno-heptose 7-phosphate. It functions in the pathway carbohydrate biosynthesis; D-glycero-D-manno-heptose 7-phosphate biosynthesis; D-glycero-alpha-D-manno-heptose 7-phosphate and D-glycero-beta-D-manno-heptose 7-phosphate from sedoheptulose 7-phosphate: step 1/1. Its function is as follows. Catalyzes the isomerization of sedoheptulose 7-phosphate in D-glycero-D-manno-heptose 7-phosphate. The protein is Phosphoheptose isomerase of Maridesulfovibrio salexigens (strain ATCC 14822 / DSM 2638 / NCIMB 8403 / VKM B-1763) (Desulfovibrio salexigens).